A 91-amino-acid polypeptide reads, in one-letter code: KAVSEKEVDSGNDIYGNPIKRIQYEIKQIKMFKGPDKDIEFIYTAPSSAVCGVSLDVGGKKEYLIAGKADGNGKMHITLCDFIVPWDTLST.

Residues 1–91 (KAVSEKEVDS…FIVPWDTLST (91 aa)) enclose the NTR domain.

It belongs to the protease inhibitor I35 (TIMP) family. In terms of processing, the activity of TIMP2 is dependent on the presence of disulfide bonds.

The protein resides in the secreted. In terms of biological role, complexes with metalloproteinases (such as collagenases) and irreversibly inactivates them. In Equus caballus (Horse), this protein is Metalloproteinase inhibitor 2 (TIMP2).